A 326-amino-acid chain; its full sequence is 4-hydroxythreonine-4-phosphate dehydrogenase (326 aa).

Residues H132 and T133 each coordinate substrate. The a divalent metal cation site is built by H162, H207, and H262. Positions 270, 279, and 288 each coordinate substrate.

The protein belongs to the PdxA family. Homodimer. The cofactor is Zn(2+). Requires Mg(2+) as cofactor. Co(2+) is required as a cofactor.

It is found in the cytoplasm. The enzyme catalyses 4-(phosphooxy)-L-threonine + NAD(+) = 3-amino-2-oxopropyl phosphate + CO2 + NADH. It participates in cofactor biosynthesis; pyridoxine 5'-phosphate biosynthesis; pyridoxine 5'-phosphate from D-erythrose 4-phosphate: step 4/5. Its function is as follows. Catalyzes the NAD(P)-dependent oxidation of 4-(phosphooxy)-L-threonine (HTP) into 2-amino-3-oxo-4-(phosphooxy)butyric acid which spontaneously decarboxylates to form 3-amino-2-oxopropyl phosphate (AHAP). This is 4-hydroxythreonine-4-phosphate dehydrogenase from Ruegeria sp. (strain TM1040) (Silicibacter sp.).